The sequence spans 133 residues: Ribosomal RNA large subunit methyltransferase H 1 (133 aa).

Residues Ile55, Gly89, and 101 to 106 contribute to the S-adenosyl-L-methionine site; that span reads ISPMEM.

The protein belongs to the RNA methyltransferase RlmH family. In terms of assembly, homodimer.

It localises to the cytoplasm. It carries out the reaction pseudouridine(1915) in 23S rRNA + S-adenosyl-L-methionine = N(3)-methylpseudouridine(1915) in 23S rRNA + S-adenosyl-L-homocysteine + H(+). Specifically methylates the pseudouridine at position 1915 (m3Psi1915) in 23S rRNA. This chain is Ribosomal RNA large subunit methyltransferase H 1, found in Thermoanaerobacter sp. (strain X514).